The chain runs to 136 residues: Frataxin, mitochondrial (136 aa).

This sequence belongs to the frataxin family. In terms of assembly, monomer. Oligomer.

It localises to the mitochondrion. It carries out the reaction 4 Fe(2+) + O2 + 4 H(+) = 4 Fe(3+) + 2 H2O. Promotes the biosynthesis of heme as well as the assembly and repair of iron-sulfur clusters by delivering Fe(2+) to proteins involved in these pathways. May play a role in the protection against iron-catalyzed oxidative stress through its ability to catalyze the oxidation of Fe(2+) to Fe(3+). May be able to store large amounts of the metal in the form of a ferrihydrite mineral by oligomerization. The protein is Frataxin, mitochondrial (frh-1) of Caenorhabditis elegans.